The chain runs to 583 residues: Ferredoxin--nitrite reductase, chloroplastic (583 aa).

The transit peptide at methionine 1–arginine 22 directs the protein to the chloroplast. Residues cysteine 461, cysteine 467, cysteine 502, and cysteine 506 each contribute to the [4Fe-4S] cluster site. Residue cysteine 506 coordinates siroheme.

It belongs to the nitrite and sulfite reductase 4Fe-4S domain family. Monomer. The cofactor is siroheme. It depends on [4Fe-4S] cluster as a cofactor.

It localises to the plastid. It is found in the chloroplast. It catalyses the reaction 6 oxidized [2Fe-2S]-[ferredoxin] + NH4(+) + 2 H2O = nitrite + 6 reduced [2Fe-2S]-[ferredoxin] + 8 H(+). It participates in nitrogen metabolism; nitrate reduction (assimilation). The sequence is that of Ferredoxin--nitrite reductase, chloroplastic (NIR1) from Betula pendula (European white birch).